Reading from the N-terminus, the 96-residue chain is Dynein light chain roadblock-type 2 (96 aa).

Alanine 2 is modified (N-acetylalanine).

Belongs to the GAMAD family. In terms of assembly, homodimer. The cytoplasmic dynein 1 complex consists of two catalytic heavy chains (HCs) and a number of non-catalytic subunits presented by intermediate chains (ICs), light intermediate chains (LICs) and light chains (LCs); the composition seems to vary in respect to the IC, LIC and LC composition. The heavy chain homodimer serves as a scaffold for the probable homodimeric assembly of the respective non-catalytic subunits. The ICs and LICs bind directly to the HC dimer and the LCs assemble on the IC dimer. Interacts with DYNC1I1 and DYNC1I2. Self-associates. Interacts with DYNLRB1.

It is found in the cytoplasm. The protein localises to the cytoskeleton. Functionally, acts as one of several non-catalytic accessory components of the cytoplasmic dynein 1 complex that are thought to be involved in linking dynein to cargos and to adapter proteins that regulate dynein function. Cytoplasmic dynein 1 acts as a motor for the intracellular retrograde motility of vesicles and organelles along microtubules. This chain is Dynein light chain roadblock-type 2 (DYNLRB2), found in Bos taurus (Bovine).